The following is a 990-amino-acid chain: Storkhead-box protein 1 (990 aa).

Residues 396 to 408 (TTRHKDSSKEVIG) show a composition bias toward basic and acidic residues. Disordered stretches follow at residues 396–471 (TTRH…VHHL), 562–586 (VAKAPVHPVSDDFRGGPGNYPPRRV), 712–736 (GLSDSEQDQVALSHSDPGAGDDGGC), and 809–832 (LFSNAGESPNPDLSDNPGQNSRIP). Residues 416–431 (KSRRRGSSHKGRHKAR) are compositionally biased toward basic residues. A compositionally biased stretch (polar residues) spans 809–830 (LFSNAGESPNPDLSDNPGQNSR).

As to expression, detected in sensory epithelial cells of the inner ear but not in adjacent surrounding tissue (at protein level).

The protein localises to the nucleus. It is found in the cytoplasm. The protein resides in the cytoskeleton. It localises to the microtubule organizing center. Its subcellular location is the centrosome. In terms of biological role, involved in regulating the levels of reactive oxidative species and reactive nitrogen species and in mitochondrial homeostasis in the placenta. Required for regulation of inner ear epithelial cell proliferation via the AKT signaling pathway. Involved in cell cycle regulation by binding to the CCNB1 promoter, up-regulating its expression and promoting mitotic entry. Induces phosphorylation of MAPT/tau. This Mus musculus (Mouse) protein is Storkhead-box protein 1.